Here is a 341-residue protein sequence, read N- to C-terminus: Holliday junction branch migration complex subunit RuvB (341 aa).

The interval 1–182 is large ATPase domain (RuvB-L); the sequence is MTERFVTPDF…FGVICRLEFY (182 aa). ATP-binding positions include leucine 21, arginine 22, glycine 63, lysine 66, threonine 67, threonine 68, 129–131, arginine 172, tyrosine 182, and arginine 219; that span reads EDY. Threonine 67 is a Mg(2+) binding site. The tract at residues 183–253 is small ATPAse domain (RuvB-S); that stretch reads TDDELATIAG…IADMALSRLE (71 aa). A head domain (RuvB-H) region spans residues 256–341; it reads NCGLDHMDRL…RGKTSGELFS (86 aa). Residues arginine 311 and arginine 316 each coordinate DNA.

This sequence belongs to the RuvB family. Homohexamer. Forms an RuvA(8)-RuvB(12)-Holliday junction (HJ) complex. HJ DNA is sandwiched between 2 RuvA tetramers; dsDNA enters through RuvA and exits via RuvB. An RuvB hexamer assembles on each DNA strand where it exits the tetramer. Each RuvB hexamer is contacted by two RuvA subunits (via domain III) on 2 adjacent RuvB subunits; this complex drives branch migration. In the full resolvosome a probable DNA-RuvA(4)-RuvB(12)-RuvC(2) complex forms which resolves the HJ.

The protein localises to the cytoplasm. The catalysed reaction is ATP + H2O = ADP + phosphate + H(+). Functionally, the RuvA-RuvB-RuvC complex processes Holliday junction (HJ) DNA during genetic recombination and DNA repair, while the RuvA-RuvB complex plays an important role in the rescue of blocked DNA replication forks via replication fork reversal (RFR). RuvA specifically binds to HJ cruciform DNA, conferring on it an open structure. The RuvB hexamer acts as an ATP-dependent pump, pulling dsDNA into and through the RuvAB complex. RuvB forms 2 homohexamers on either side of HJ DNA bound by 1 or 2 RuvA tetramers; 4 subunits per hexamer contact DNA at a time. Coordinated motions by a converter formed by DNA-disengaged RuvB subunits stimulates ATP hydrolysis and nucleotide exchange. Immobilization of the converter enables RuvB to convert the ATP-contained energy into a lever motion, pulling 2 nucleotides of DNA out of the RuvA tetramer per ATP hydrolyzed, thus driving DNA branch migration. The RuvB motors rotate together with the DNA substrate, which together with the progressing nucleotide cycle form the mechanistic basis for DNA recombination by continuous HJ branch migration. Branch migration allows RuvC to scan DNA until it finds its consensus sequence, where it cleaves and resolves cruciform DNA. The protein is Holliday junction branch migration complex subunit RuvB of Syntrophotalea carbinolica (strain DSM 2380 / NBRC 103641 / GraBd1) (Pelobacter carbinolicus).